We begin with the raw amino-acid sequence, 280 residues long: 3-phenylpropionate-dihydrodiol/cinnamic acid-dihydrodiol dehydrogenase (280 aa).

Residue S143 coordinates substrate. Catalysis depends on Y156, which acts as the Proton acceptor.

The protein belongs to the short-chain dehydrogenases/reductases (SDR) family.

The catalysed reaction is 3-(cis-5,6-dihydroxycyclohexa-1,3-dien-1-yl)propanoate + NAD(+) = 3-(2,3-dihydroxyphenyl)propanoate + NADH + H(+). It catalyses the reaction (2E)-3-(cis-5,6-dihydroxycyclohexa-1,3-dien-1-yl)prop-2-enoate + NAD(+) = (2E)-3-(2,3-dihydroxyphenyl)prop-2-enoate + NADH + H(+). It participates in aromatic compound metabolism; 3-phenylpropanoate degradation. Converts 3-phenylpropionate-dihydrodiol (PP-dihydrodiol) and cinnamic acid-dihydrodiol (CI-dihydrodiol) into 3-(2,3-dihydroxylphenyl)propanoic acid (DHPP) and 2,3-dihydroxicinnamic acid (DHCI), respectively. The sequence is that of 3-phenylpropionate-dihydrodiol/cinnamic acid-dihydrodiol dehydrogenase from Photorhabdus laumondii subsp. laumondii (strain DSM 15139 / CIP 105565 / TT01) (Photorhabdus luminescens subsp. laumondii).